We begin with the raw amino-acid sequence, 284 residues long: D-tagatose-1,6-bisphosphate aldolase subunit GatY (284 aa).

Catalysis depends on Asp82, which acts as the Proton donor. 2 residues coordinate Zn(2+): His83 and His180. Gly181 contacts dihydroxyacetone phosphate. Position 208 (His208) interacts with Zn(2+). Dihydroxyacetone phosphate-binding positions include 209 to 211 (GAS) and 230 to 233 (NVAT).

The protein belongs to the class II fructose-bisphosphate aldolase family. TagBP aldolase GatY subfamily. As to quaternary structure, forms a complex with GatZ. Zn(2+) serves as cofactor.

The enzyme catalyses D-tagatofuranose 1,6-bisphosphate = D-glyceraldehyde 3-phosphate + dihydroxyacetone phosphate. It functions in the pathway carbohydrate metabolism; D-tagatose 6-phosphate degradation; D-glyceraldehyde 3-phosphate and glycerone phosphate from D-tagatose 6-phosphate: step 2/2. Functionally, catalytic subunit of the tagatose-1,6-bisphosphate aldolase GatYZ, which catalyzes the reversible aldol condensation of dihydroxyacetone phosphate (DHAP or glycerone-phosphate) with glyceraldehyde 3-phosphate (G3P) to produce tagatose 1,6-bisphosphate (TBP). Requires GatZ subunit for full activity and stability. Is involved in the catabolism of galactitol. The polypeptide is D-tagatose-1,6-bisphosphate aldolase subunit GatY (Escherichia coli O17:K52:H18 (strain UMN026 / ExPEC)).